The sequence spans 363 residues: Aspartate-semialdehyde dehydrogenase (363 aa).

Residues T15, G16, S17, V18, S40, S43, and L87 each contribute to the NADP(+) site. C154 serves as the catalytic Acyl-thioester intermediate. G186 contacts NADP(+). Catalysis depends on H251, which acts as the Proton acceptor. N341 lines the NADP(+) pocket.

Belongs to the aspartate-semialdehyde dehydrogenase family. As to quaternary structure, homotetramer; dimer of dimers.

The protein localises to the cytoplasm. The protein resides in the cytosol. It localises to the nucleus. The catalysed reaction is L-aspartate 4-semialdehyde + phosphate + NADP(+) = 4-phospho-L-aspartate + NADPH + H(+). The protein operates within amino-acid biosynthesis; L-methionine biosynthesis via de novo pathway; L-homoserine from L-aspartate: step 2/3. It functions in the pathway amino-acid biosynthesis; L-threonine biosynthesis; L-threonine from L-aspartate: step 2/5. With respect to regulation, inhibited by 4-amino-3-hydroxynaphthalene-1-sulfonic acid and the competitive inhibitor 1,4-benzoquinone and derivates such as 2-chloro-3-methoxy-1,4-naphthoquinone, 2,3-dichloro-1,4-naphthoquinone, 2-chloro-1,4-naphthoquinone, 2-bromo-1,4-naphthoquinone and 2,3-dichloro-5,8-dihydroxy-1,4-naphthoquinone. Functionally, catalyzes the NADPH-dependent formation of L-aspartate 4-semialdehyde (L-ASA) by the reductive dephosphorylation of 4-phospho-L-aspartate. Mediates the second step in the biosynthesis of amino acids that derive from aspartate (the aspartate family of amino acids), including methioinine and threonine, the latter of which is a precursor to isoleucine. This is Aspartate-semialdehyde dehydrogenase from Aspergillus fumigatus (strain ATCC MYA-4609 / CBS 101355 / FGSC A1100 / Af293) (Neosartorya fumigata).